The primary structure comprises 521 residues: Maturase K (521 aa).

This sequence belongs to the intron maturase 2 family. MatK subfamily.

The protein localises to the plastid. Its function is as follows. Usually encoded in the trnK tRNA gene intron. Probably assists in splicing its own and other chloroplast group II introns. The sequence is that of Maturase K from Cuscuta exaltata (Tall dodder).